The sequence spans 211 residues: Eukaryotic translation initiation factor 4E (211 aa).

The protein belongs to the eukaryotic initiation factor 4E family. As to quaternary structure, eIF4F is a multi-subunit complex, the composition of which varies with external and internal environmental conditions. It is composed of at least eIF4A, eIF4E and eIF4G. eIF4E is also known to interact with other partners.

Its function is as follows. Recognizes and binds the 7-methylguanosine-containing mRNA cap during an early step in the initiation of protein synthesis and facilitates ribosome binding by inducing the unwinding of the mRNAs secondary structures. This is Eukaryotic translation initiation factor 4E (TIF45) from Eremothecium gossypii (strain ATCC 10895 / CBS 109.51 / FGSC 9923 / NRRL Y-1056) (Yeast).